The chain runs to 308 residues: Aspartate carbamoyltransferase catalytic subunit (308 aa).

Residues Arg-57 and Thr-58 each contribute to the carbamoyl phosphate site. Lys-86 is a binding site for L-aspartate. Residues Arg-107, His-135, and Gln-138 each coordinate carbamoyl phosphate. 2 residues coordinate L-aspartate: Arg-168 and Arg-229. Positions 268 and 269 each coordinate carbamoyl phosphate.

The protein belongs to the aspartate/ornithine carbamoyltransferase superfamily. ATCase family. As to quaternary structure, heterooligomer of catalytic and regulatory chains.

It catalyses the reaction carbamoyl phosphate + L-aspartate = N-carbamoyl-L-aspartate + phosphate + H(+). It functions in the pathway pyrimidine metabolism; UMP biosynthesis via de novo pathway; (S)-dihydroorotate from bicarbonate: step 2/3. In terms of biological role, catalyzes the condensation of carbamoyl phosphate and aspartate to form carbamoyl aspartate and inorganic phosphate, the committed step in the de novo pyrimidine nucleotide biosynthesis pathway. This Thermococcus gammatolerans (strain DSM 15229 / JCM 11827 / EJ3) protein is Aspartate carbamoyltransferase catalytic subunit.